A 723-amino-acid chain; its full sequence is Multiple organellar RNA editing factor 4, mitochondrial (723 aa).

The N-terminal 64 residues, 1-64, are a transit peptide targeting the mitochondrion; sequence MAMFSHRLRR…RLFSTTQYQY (64 aa). Disordered regions lie at residues 180–303, 318–474, and 663–723; these read ITPG…GQTQ, RQEM…EGQP, and QNGG…NSRI. The span at 191–204 shows a compositional bias: basic and acidic residues; it reads EGFDSLKKESKPEQ. 4 stretches are compositionally biased toward polar residues: residues 219–233, 273–303, 327–365, and 373–430; these read TSGQ…TLPD, GQWQ…GQTQ, GQAQ…QGAQ, and QGAQ…NYSP. Composition is skewed to low complexity over residues 459–474 and 682–695; these read QGQG…EGQP and QGFS…TFQQ. The segment covering 714–723 has biased composition (basic and acidic residues); that stretch reads TETRKPNSRI.

Belongs to the MORF family. In terms of assembly, heterodimers with MORF8/RIP1, MORF1/RIP8 and MORF3/RIP3.

The protein localises to the mitochondrion. Involved in organellar RNA editing. Required for the processing of few RNA editing site in mitochondria. The polypeptide is Multiple organellar RNA editing factor 4, mitochondrial (Arabidopsis thaliana (Mouse-ear cress)).